The chain runs to 956 residues: Zinc fingers and homeoboxes protein 3 (956 aa).

The segment at M1 to P107 is required for nuclear localization. The disordered stretch occupies residues D22–N66. The segment covering P42–S58 has biased composition (low complexity). 2 consecutive C2H2-type zinc fingers follow at residues Y77–H100 and F109–H132. The interval A242–S488 is required for homodimerization and interaction with NFYA. The required for repressor activity stretch occupies residues L303 to S502. 2 DNA-binding regions (homeobox) span residues S304–W363 and A494–K553. Residues Y497 to S555 form a required for nuclear localization region. Disordered stretches follow at residues P598–E618 and K666–D695. 2 positions are modified to phosphoserine: S599 and S604. Residues T612–E671 constitute a DNA-binding region (homeobox 3). The segment covering K666 to E677 has biased composition (basic and acidic residues). Residues A679–D695 show a composition bias toward acidic residues. 3 positions are modified to phosphoserine: S680, S708, and S723. 2 DNA-binding regions (homeobox) span residues P764–Q823 and F835–V894. Residues E890–D956 are disordered. S927 and S946 each carry phosphoserine.

It belongs to the ZHX family. Homodimer (via homeobox domain 1). Heterodimer with ZHX1 (via homeobox domain 1). Heterodimer with ZHX2 (via homeobox domain 1). Heterodimerization with ZHX1 is a prerequisite for repressor activity. Interacts with NFYA. In terms of tissue distribution, widely expressed. High expression in kidney. Expressed during osteogenic differentiation.

It is found in the nucleus. Functionally, acts as a transcriptional repressor. Involved in the early stages of mesenchymal stem cell (MSC) osteogenic differentiation. Is a regulator of podocyte gene expression during primary glomerula disease. Binds to promoter DNA. This chain is Zinc fingers and homeoboxes protein 3 (ZHX3), found in Homo sapiens (Human).